Here is a 188-residue protein sequence, read N- to C-terminus: Threonylcarbamoyl-AMP synthase (188 aa).

A YrdC-like domain is found at 3 to 188 (QLHPSDIKDI…RSGKILRNGQ (186 aa)).

Belongs to the SUA5 family. TsaC subfamily.

It localises to the cytoplasm. It carries out the reaction L-threonine + hydrogencarbonate + ATP = L-threonylcarbamoyladenylate + diphosphate + H2O. Required for the formation of a threonylcarbamoyl group on adenosine at position 37 (t(6)A37) in tRNAs that read codons beginning with adenine. Catalyzes the conversion of L-threonine, HCO(3)(-)/CO(2) and ATP to give threonylcarbamoyl-AMP (TC-AMP) as the acyladenylate intermediate, with the release of diphosphate. The polypeptide is Threonylcarbamoyl-AMP synthase (Shewanella putrefaciens (strain CN-32 / ATCC BAA-453)).